Here is a 592-residue protein sequence, read N- to C-terminus: Transmembrane 9 superfamily member 3 (592 aa).

The N-terminal stretch at 1-19 is a signal peptide; that stretch reads MRLPTTLLLFIGALIFSGA. Over 20 to 229 the chain is Lumenal; the sequence is GTVRSDASDH…SLPHHLEIHW (210 aa). The chain crosses the membrane as a helical span at residues 230–250; sequence FSIINSCVTVLLLTGFLATIL. Over 251-302 the chain is Cytoplasmic; that stretch reads MRVLKNDFMKYAQDEEAADDQEETGWKYIHGDVFRFPKNKSLFAASLGSGTQ. Residues 303–323 traverse the membrane as a helical segment; it reads LFTLTIFIFMLSLVGVFYPYN. Topologically, residues 324–325 are lumenal; the sequence is RG. A helical transmembrane segment spans residues 326-346; sequence ALFTALVVIYALTSGIAGYTA. The Cytoplasmic segment spans residues 347 to 365; the sequence is SSFYCQLEGKNWVRNLLLT. A helical transmembrane segment spans residues 366-386; sequence GGLFCGPLFLTFCFLNTVAIA. The Lumenal segment spans residues 387 to 397; sequence YSATAALPFGT. A helical transmembrane segment spans residues 398-418; the sequence is IIVIVLIWTLVTSPLLVLGGI. Over 419 to 452 the chain is Cytoplasmic; that stretch reads AGKNSKAEFQAPVRTTKYPREIPPLPWYRSAVPQ. The chain crosses the membrane as a helical span at residues 453–473; sequence MAMAGFLPFSAIYIELYYIFA. Over 474–485 the chain is Lumenal; it reads SVWGHRIYTIYS. The chain crosses the membrane as a helical span at residues 486–506; the sequence is ILFIVFIILLIVTAFITVALT. Topologically, residues 507–521 are cytoplasmic; that stretch reads YFQLAAEDHEWWWRS. The chain crosses the membrane as a helical span at residues 522 to 542; it reads FLCGGSTGLFIYAYCLYYYYA. The Lumenal segment spans residues 543–553; it reads RSDMSGFMQTS. The chain crosses the membrane as a helical span at residues 554–574; that stretch reads FFFGYMACICYGFFLMLGTVG. Topologically, residues 575 to 592 are cytoplasmic; it reads FRAALLFVRHIYRSIKCE. Positions 581–586 match the Endoplasmic reticulum export signal motif; sequence FVRHIY. Residues 590 to 592 carry the Golgi retention signal motif; that stretch reads KCE.

It belongs to the nonaspanin (TM9SF) (TC 9.A.2) family.

Its subcellular location is the endosome membrane. It is found in the golgi apparatus membrane. This Arabidopsis thaliana (Mouse-ear cress) protein is Transmembrane 9 superfamily member 3.